Reading from the N-terminus, the 268-residue chain is Ribosomal RNA small subunit methyltransferase A (268 aa).

6 residues coordinate S-adenosyl-L-methionine: Asn-18, Leu-20, Gly-45, Glu-66, Asp-91, and Asn-112.

It belongs to the class I-like SAM-binding methyltransferase superfamily. rRNA adenine N(6)-methyltransferase family. RsmA subfamily.

It is found in the cytoplasm. It catalyses the reaction adenosine(1518)/adenosine(1519) in 16S rRNA + 4 S-adenosyl-L-methionine = N(6)-dimethyladenosine(1518)/N(6)-dimethyladenosine(1519) in 16S rRNA + 4 S-adenosyl-L-homocysteine + 4 H(+). Functionally, specifically dimethylates two adjacent adenosines (A1518 and A1519) in the loop of a conserved hairpin near the 3'-end of 16S rRNA in the 30S particle. May play a critical role in biogenesis of 30S subunits. In Shewanella sp. (strain MR-7), this protein is Ribosomal RNA small subunit methyltransferase A.